We begin with the raw amino-acid sequence, 215 residues long: MDKNKTIRIALTKGRLEKAAVEIFENIGLDCSELKDKGRKLIFHDFKNSIDFVLVKAPDVLTYVEHGAADIGIVGKDTLLEMKKDFYEVLDLKVGKCKFSLASISSFKLNEGFNRMKIATKYPNVTREYFREKGIDVEIIKIEGSVELAPILNLADAIVDIVETGTTLKENGLVIFDDICDISARMIVNRASMKLNKDRITDIIQKVKNYVERES.

The protein belongs to the ATP phosphoribosyltransferase family. Short subfamily. In terms of assembly, heteromultimer composed of HisG and HisZ subunits.

It localises to the cytoplasm. It catalyses the reaction 1-(5-phospho-beta-D-ribosyl)-ATP + diphosphate = 5-phospho-alpha-D-ribose 1-diphosphate + ATP. It functions in the pathway amino-acid biosynthesis; L-histidine biosynthesis; L-histidine from 5-phospho-alpha-D-ribose 1-diphosphate: step 1/9. Its function is as follows. Catalyzes the condensation of ATP and 5-phosphoribose 1-diphosphate to form N'-(5'-phosphoribosyl)-ATP (PR-ATP). Has a crucial role in the pathway because the rate of histidine biosynthesis seems to be controlled primarily by regulation of HisG enzymatic activity. The polypeptide is ATP phosphoribosyltransferase (hisG) (Clostridium acetobutylicum (strain ATCC 824 / DSM 792 / JCM 1419 / IAM 19013 / LMG 5710 / NBRC 13948 / NRRL B-527 / VKM B-1787 / 2291 / W)).